The sequence spans 578 residues: Zinc finger protein with KRAB and SCAN domains 8 (578 aa).

Residues 1–20 (MAEESRKPSAPSPPDQTPEE) form a disordered region. S12 is modified (phosphoserine). K26 is covalently cross-linked (Glycyl lysine isopeptide (Lys-Gly) (interchain with G-Cter in SUMO2)). An SCAN box domain is found at 51 to 133 (RLRFRQLCYQ…TLLEDLERQI (83 aa)). A disordered region spans residues 158–205 (ASAPEPPNTQLQSEATQHKSPVPQESQERSMSTSQSPTRSQKGSSGDQ). The segment covering 165-205 (NTQLQSEATQHKSPVPQESQERSMSTSQSPTRSQKGSSGDQ) has biased composition (polar residues). Residues K176 and K199 each participate in a glycyl lysine isopeptide (Lys-Gly) (interchain with G-Cter in SUMO2) cross-link. The residue at position 201 (S201) is a Phosphoserine. In terms of domain architecture, KRAB spans 220–316 (EKIEDMAVSL…GRLERQRGNP (97 aa)). Glycyl lysine isopeptide (Lys-Gly) (interchain with G-Cter in SUMO2) cross-links involve residues K221, K272, and K288. 2 consecutive C2H2-type zinc fingers follow at residues 322-344 (HKCD…WRIH) and 350-372 (YQCN…QDIH). Glycyl lysine isopeptide (Lys-Gly) (interchain with G-Cter in SUMO2) cross-links involve residues K374 and K376. 7 C2H2-type zinc fingers span residues 378-400 (YHCK…QRIH), 406-428 (YQCN…QRIH), 434-456 (YECN…QRIH), 462-484 (YECD…QRSH), 490-512 (YKCN…QRIH), 518-540 (YKCK…LRIH), and 546-568 (YQCN…QRIH). Glycyl lysine isopeptide (Lys-Gly) (interchain with G-Cter in SUMO2) cross-links involve residues K413 and K441. A Glycyl lysine isopeptide (Lys-Gly) (interchain with G-Cter in SUMO2) cross-link involves residue K502. Residue K572 forms a Glycyl lysine isopeptide (Lys-Gly) (interchain with G-Cter in SUMO2) linkage.

It belongs to the krueppel C2H2-type zinc-finger protein family.

It is found in the nucleus. In terms of biological role, may be involved in transcriptional regulation. The sequence is that of Zinc finger protein with KRAB and SCAN domains 8 (ZKSCAN8) from Pan paniscus (Pygmy chimpanzee).